The following is a 258-amino-acid chain: Triosephosphate isomerase (258 aa).

Residue 11–13 participates in substrate binding; that stretch reads NWK. His-101 acts as the Electrophile in catalysis. Glu-173 serves as the catalytic Proton acceptor. Substrate contacts are provided by residues Gly-179, Ser-219, and 240–241; that span reads GG.

It belongs to the triosephosphate isomerase family. As to quaternary structure, homodimer.

Its subcellular location is the cytoplasm. It carries out the reaction D-glyceraldehyde 3-phosphate = dihydroxyacetone phosphate. The protein operates within carbohydrate biosynthesis; gluconeogenesis. Its pathway is carbohydrate degradation; glycolysis; D-glyceraldehyde 3-phosphate from glycerone phosphate: step 1/1. Its function is as follows. Involved in the gluconeogenesis. Catalyzes stereospecifically the conversion of dihydroxyacetone phosphate (DHAP) to D-glyceraldehyde-3-phosphate (G3P). The polypeptide is Triosephosphate isomerase (Streptomyces avermitilis (strain ATCC 31267 / DSM 46492 / JCM 5070 / NBRC 14893 / NCIMB 12804 / NRRL 8165 / MA-4680)).